Reading from the N-terminus, the 491-residue chain is Protein translocase subunit SecY (491 aa).

The Cytoplasmic segment spans residues 1-20; it reads MGWKEAAAPVLTRMPAVERP. A helical transmembrane segment spans residues 21 to 47; sequence EGHVPFRRKMYWTGGVLVLYFFLTNVP. Topologically, residues 48–58 are extracellular; the sequence is LWGIQTAGNDF. The helical intramembrane region spans 59 to 66; that stretch reads FGQFRSLL. The chain crosses the membrane as a discontinuously helical span at residues 59–87; that stretch reads FGQFRSLLAGGQGTVLQLGIGPIVTASIV. The stretch at 67-78 is an intramembrane region; sequence AGGQGTVLQLGI. Positions 79–87 form an intramembrane region, helical; the sequence is GPIVTASIV. The Cytoplasmic portion of the chain corresponds to 88–109; that stretch reads LQLLGGANLLGLDTDNDPRDQA. The helical transmembrane segment at 110–134 threads the bilayer; that stretch reads IYQGLQKFLVGVMVVLTGAPMVFLG. The Extracellular portion of the chain corresponds to 135 to 152; the sequence is NFLQPSQQLAQSMPGGAF. The helical transmembrane segment at 153-177 threads the bilayer; the sequence is GVEVLIFAQIAAGGILLLFMDEVIS. The Cytoplasmic segment spans residues 178-183; it reads KWGVGS. A helical transmembrane segment spans residues 184–202; sequence GIGLFIVAGVSQSLVGGLV. The Extracellular portion of the chain corresponds to 203–244; that stretch reads FWEGGVGSQGLLPTWFDIIVGNVSNMPPLLSGSGIEFLLMQA. The chain crosses the membrane as a helical span at residues 245-266; the sequence is GILGLLTTLFIYVVVVYAESVR. Residues 267 to 291 lie on the Cytoplasmic side of the membrane; that stretch reads VEIPLSHARVKGARGRFPVKLIYAS. Residues 292-313 form a helical membrane-spanning segment; it reads VLPMILVRALQANIQFLGQILN. The Extracellular portion of the chain corresponds to 314-365; the sequence is STLASMPTWLGVYGGNGQVTGGLFYYLAPIYSPNAWMWWTSGATAARWQVLI. The chain crosses the membrane as a helical span at residues 366-385; that stretch reads RIAIDLSFMIIGGAIFAIFW. At 386-428 the chain is on the cytoplasmic side; the sequence is VETADMGPDATARQIQNSGMQIPGFRKNQGVIEKVMERYIPQV. Residues 429–447 form a helical membrane-spanning segment; the sequence is TVIGGALVGLLAVMANMLG. Over 448 to 452 the chain is Extracellular; the sequence is TIGNV. A helical transmembrane segment spans residues 453–467; it reads SGTGLLLTISITYKL. Residues 468–491 lie on the Cytoplasmic side of the membrane; it reads YEEIAEEQMMEMHPMMREMFGGGD.

This sequence belongs to the SecY/SEC61-alpha family. Component of the Sec protein translocase complex. Heterotrimer consisting of alpha (SecY), beta (SecG) and gamma (SecE) subunits. The heterotrimers can form oligomers, although 1 heterotrimer is thought to be able to translocate proteins. Interacts with the ribosome. May interact with SecDF, and other proteins may be involved.

The protein localises to the cell membrane. The central subunit of the protein translocation channel SecYEG. Consists of two halves formed by TMs 1-5 and 6-10. These two domains form a lateral gate at the front which open onto the bilayer between TMs 2 and 7, and are clamped together by SecE at the back. The channel is closed by both a pore ring composed of hydrophobic SecY resides and a short helix (helix 2A) on the extracellular side of the membrane which forms a plug. The plug probably moves laterally to allow the channel to open. The ring and the pore may move independently. The protein is Protein translocase subunit SecY of Halobacterium salinarum (strain ATCC 700922 / JCM 11081 / NRC-1) (Halobacterium halobium).